The chain runs to 403 residues: L-cysteine:1D-myo-inositol 2-amino-2-deoxy-alpha-D-glucopyranoside ligase (403 aa).

A Zn(2+)-binding site is contributed by Cys-43. Residues 43-46, Thr-58, and 81-83 each bind L-cysteinyl-5'-AMP; these read CGIT and NTT. The 'HIGH' region signature appears at 45-55; it reads ITPYDATHLGH. Residues 183–188 carry the 'ERGGDP' region motif; that stretch reads ERGGDP. Trp-223 contacts L-cysteinyl-5'-AMP. Cys-227 is a Zn(2+) binding site. 245 to 247 is an L-cysteinyl-5'-AMP binding site; sequence GSD. His-252 is a Zn(2+) binding site. Val-279 lines the L-cysteinyl-5'-AMP pocket. The 'KMSKS' region motif lies at 285 to 289; it reads KMSKS.

It belongs to the class-I aminoacyl-tRNA synthetase family. MshC subfamily. In terms of assembly, monomer. It depends on Zn(2+) as a cofactor.

The enzyme catalyses 1D-myo-inositol 2-amino-2-deoxy-alpha-D-glucopyranoside + L-cysteine + ATP = 1D-myo-inositol 2-(L-cysteinylamino)-2-deoxy-alpha-D-glucopyranoside + AMP + diphosphate + H(+). In terms of biological role, catalyzes the ATP-dependent condensation of GlcN-Ins and L-cysteine to form L-Cys-GlcN-Ins. This chain is L-cysteine:1D-myo-inositol 2-amino-2-deoxy-alpha-D-glucopyranoside ligase, found in Thermobispora bispora (strain ATCC 19993 / DSM 43833 / CBS 139.67 / JCM 10125 / KCTC 9307 / NBRC 14880 / R51).